Reading from the N-terminus, the 682-residue chain is Two-component system protein A (682 aa).

A disordered region spans residues Ser-11 to Ser-41. A compositionally biased stretch (basic and acidic residues) spans His-21–Gln-32. PAS domains are found at residues Leu-45–Tyr-105 and Met-166–Gly-239. Residues Ile-241–Ala-292 enclose the PAC domain. In terms of domain architecture, Histidine kinase spans Asn-307 to Gly-530. Phosphohistidine; by autocatalysis is present on His-310. The 118-residue stretch at His-563–Phe-680 folds into the Response regulatory domain. Position 615 is a 4-aspartylphosphate (Asp-615).

In terms of processing, activation probably requires a transfer of a phosphate group between a His in the histidine kinase domain and an Asp of the response regulatory domain.

It is found in the cytoplasm. The catalysed reaction is ATP + protein L-histidine = ADP + protein N-phospho-L-histidine.. Its function is as follows. May be part of a two-component regulatory system required for formation of conidia on certain growth media. This Emericella nidulans (strain FGSC A4 / ATCC 38163 / CBS 112.46 / NRRL 194 / M139) (Aspergillus nidulans) protein is Two-component system protein A.